A 718-amino-acid chain; its full sequence is Catalase-peroxidase (718 aa).

The segment at residues 98-219 (WHAAGTYRMG…LAATEMGLIY (122 aa)) is a cross-link (tryptophyl-tyrosyl-methioninium (Trp-Tyr) (with M-245)). His-99 functions as the Proton acceptor in the catalytic mechanism. A cross-link (tryptophyl-tyrosyl-methioninium (Tyr-Met) (with W-98)) is located at residues 219 to 245 (YVNPEGPQASGDPRSAAPFIRATFGNM). His-260 is a heme b binding site.

The protein belongs to the peroxidase family. Peroxidase/catalase subfamily. Homodimer or homotetramer. The cofactor is heme b. Post-translationally, formation of the three residue Trp-Tyr-Met cross-link is important for the catalase, but not the peroxidase activity of the enzyme.

The enzyme catalyses H2O2 + AH2 = A + 2 H2O. It catalyses the reaction 2 H2O2 = O2 + 2 H2O. Functionally, bifunctional enzyme with both catalase and broad-spectrum peroxidase activity. This Acinetobacter baumannii (strain AB307-0294) protein is Catalase-peroxidase.